The primary structure comprises 319 residues: Transaldolase (319 aa).

Lys125 serves as the catalytic Schiff-base intermediate with substrate.

This sequence belongs to the transaldolase family. Type 1 subfamily. Homodimer.

It localises to the cytoplasm. The catalysed reaction is D-sedoheptulose 7-phosphate + D-glyceraldehyde 3-phosphate = D-erythrose 4-phosphate + beta-D-fructose 6-phosphate. The protein operates within carbohydrate degradation; pentose phosphate pathway; D-glyceraldehyde 3-phosphate and beta-D-fructose 6-phosphate from D-ribose 5-phosphate and D-xylulose 5-phosphate (non-oxidative stage): step 2/3. In terms of biological role, transaldolase is important for the balance of metabolites in the pentose-phosphate pathway. In Ralstonia nicotianae (strain ATCC BAA-1114 / GMI1000) (Ralstonia solanacearum), this protein is Transaldolase.